We begin with the raw amino-acid sequence, 71 residues long: Protein CYSTEINE-RICH TRANSMEMBRANE MODULE 8 (71 aa).

Positions 1–22 (MNQSAQNYFSVQKPSETSSGPY) are enriched in polar residues. The interval 1–35 (MNQSAQNYFSVQKPSETSSGPYTSPPPIGYPTRDA) is disordered. The chain crosses the membrane as a helical span at residues 48 to 64 (NSKGVNPEGCCAAICCC).

Belongs to the CYSTM1 family. Mostly expressed in stems, siliques, roots and flowers and, to a lower extent, in leaves.

The protein localises to the membrane. The protein resides in the nucleus. In terms of biological role, involved in resistance to abiotic stress. The polypeptide is Protein CYSTEINE-RICH TRANSMEMBRANE MODULE 8 (Arabidopsis thaliana (Mouse-ear cress)).